Consider the following 430-residue polypeptide: Asparagine--tRNA ligase (430 aa).

It belongs to the class-II aminoacyl-tRNA synthetase family. In terms of assembly, homodimer.

The protein localises to the cytoplasm. The catalysed reaction is tRNA(Asn) + L-asparagine + ATP = L-asparaginyl-tRNA(Asn) + AMP + diphosphate + H(+). This is Asparagine--tRNA ligase from Staphylococcus epidermidis (strain ATCC 35984 / DSM 28319 / BCRC 17069 / CCUG 31568 / BM 3577 / RP62A).